Reading from the N-terminus, the 430-residue chain is Hydrogenobyrinate a,c-diamide synthase (430 aa).

The 184-residue stretch at 239 to 422 (RIGVARDAAF…IHFYLPSDPL (184 aa)) folds into the GATase cobBQ-type domain. C321 functions as the Nucleophile in the catalytic mechanism.

It belongs to the CobB/CbiA family. Mg(2+) serves as cofactor.

The enzyme catalyses hydrogenobyrinate + 2 L-glutamine + 2 ATP + 2 H2O = hydrogenobyrinate a,c-diamide + 2 L-glutamate + 2 ADP + 2 phosphate + 2 H(+). The protein operates within cofactor biosynthesis; adenosylcobalamin biosynthesis; cob(II)yrinate a,c-diamide from precorrin-2 (aerobic route): step 9/10. Catalyzes the ATP-dependent amidation of the two carboxylate groups at positions a and c of hydrogenobyrinate, using either L-glutamine or ammonia as the nitrogen source. The protein is Hydrogenobyrinate a,c-diamide synthase of Stutzerimonas stutzeri (strain A1501) (Pseudomonas stutzeri).